Reading from the N-terminus, the 228-residue chain is Isonitrile hydratase (228 aa).

Cys-101 is a catalytic residue.

In terms of assembly, homodimer.

It carries out the reaction N-cyclohexylformamide = cyclohexyl isocyanide + H2O. Its activity is regulated as follows. Sensitive to thiol reagents and oxidizing reagents, but is not influenced by chelators or reducing reagents. Functionally, catalyzes the hydration of cyclohexyl isocyanide to N-cyclohexylformamide. Acts on various isonitriles, but not on nitriles or amides. Probably involved in detoxification. In Pseudomonas putida (Arthrobacter siderocapsulatus), this protein is Isonitrile hydratase (inhA).